Here is a 462-residue protein sequence, read N- to C-terminus: Retinoic acid receptor alpha (462 aa).

Residues 1 to 87 are modulating; the sequence is MASNSSSCPT…PPPLPRIYKP (87 aa). Over residues 52–64 the composition is skewed to polar residues; that stretch reads GYSTPSPATIETQ. Positions 52 to 77 are disordered; the sequence is GYSTPSPATIETQSSSSEEIVPSPPS. Ser-77 is modified (phosphoserine; by CDK7). 2 NR C4-type zinc fingers span residues 88-108 and 124-148; these read CFVC…CEGC and CHRD…LQKC. Residues 88 to 153 constitute a DNA-binding region (nuclear receptor); it reads CFVCQDKSSG…RLQKCFEVGM (66 aa). Phosphoserine; by PKB/AKT1 is present on Ser-96. The hinge stretch occupies residues 154 to 182; the sequence is SKESVRNDRNKKKKEVPKPECSESYTLTP. Residues Lys-166 and Lys-171 each participate in a glycyl lysine isopeptide (Lys-Gly) (interchain with G-Cter in SUMO) cross-link. The NR LBD domain occupies 183–417; the sequence is EVGELIEKVR…PLIQEMLENS (235 aa). Ser-219 bears the Phosphoserine; by PKA mark. An all-trans-retinoate-binding site is contributed by Cys-235. The UBR5-degron signature appears at 254–258; that stretch reads IADQI. Residue Ser-287 participates in all-trans-retinoate binding. Ser-369 carries the phosphoserine; by PKA modification. Lys-399 participates in a covalent cross-link: Glycyl lysine isopeptide (Lys-Gly) (interchain with G-Cter in SUMO). The segment at 404-419 is required for binding corepressor NCOR1; the sequence is GSMPPLIQEMLENSEG. Residues 408–416 carry the 9aaTAD motif; sequence PLIQEMLEN. Residues 419-462 form a disordered region; that stretch reads GLDTLSGQPGGGGRDGGGLAPPPGSCSPSLSPSSNRSSPATHSP. Residues 426–437 show a composition bias toward gly residues; it reads QPGGGGRDGGGL. The span at 444–462 shows a compositional bias: low complexity; sequence CSPSLSPSSNRSSPATHSP.

Belongs to the nuclear hormone receptor family. NR1 subfamily. In terms of assembly, heterodimer; with RXRA (via C-terminus); association with RXRA is enhanced by pulsatile shear stress. Binds DNA preferentially as a heterodimer. RXRA serves as enhancer to induce RARA binding to RARE. Interacts with RXRG. Interacts with coactivators NCOA3 and NCOA6. Interacts with NCOA7; the interaction requires ligand-binding. Interacts (via the ligand-binding domain) with PRAME; the interaction is ligand (retinoic acid)-dependent. Interacts with AKT1; the interaction phosphorylates RARA and represses transactivation. Interacts with PRKAR1A; the interaction negatively regulates RARA transcriptional activity. Interacts with NCOR1 and NCOR2. Interacts with PRMT2. Interacts with LRIF1. Interacts with ASXL1 and NCOA1. Interacts with ACTN4. In a complex with HDAC3, HDAC5 and HDAC7; the HDACs serve as corepressors of RARA, causing its deacetylation and inhibition of RARE DNA element binding; association with HDAC3, HDAC5 and HDAC7 is increased upon oscillatory shear stress. Interacts with CDK7. In the absence of hormonal ligand, interacts with TACC1. In terms of processing, phosphorylated on serine and threonine residues. Phosphorylation does not change during cell cycle. Phosphorylation on Ser-77 is crucial for transcriptional activity. Phosphorylation by AKT1 is required for the repressor activity but has no effect on DNA binding, protein stability nor subcellular localization. Phosphorylated by PKA in vitro. This phosphorylation on Ser-219 and Ser-369 is critical for ligand binding, nuclear localization and transcriptional activity in response to FSH signaling. Sumoylated with SUMO2, mainly on Lys-399 which is also required for SENP6 binding. On all-trans retinoic acid (ATRA) binding, a conformational change may occur that allows sumoylation on two additional site, Lys-166 and Lys-171. Probably desumoylated by SENP6. Sumoylation levels determine nuclear localization and regulate ATRA-mediated transcriptional activity. Post-translationally, trimethylation enhances heterodimerization with RXRA and positively modulates the transcriptional activation. In terms of processing, ubiquitinated by UBR5, leading to its degradation: UBR5 specifically recognizes and binds ligand-bound RARA when it is not associated with coactivators (NCOAs). In presence of NCOAs, the UBR5-degron is not accessible, preventing its ubiquitination and degradation. Acetylated; acetylation is increased upon pulsatile shear stress and decreased upon oscillatory shear stress. In terms of tissue distribution, expressed in monocytes.

The protein resides in the nucleus. It localises to the cytoplasm. Functionally, receptor for retinoic acid. Retinoic acid receptors bind as heterodimers to their target response elements in response to their ligands, all-trans or 9-cis retinoic acid, and regulate gene expression in various biological processes. The RXR/RAR heterodimers bind to the retinoic acid response elements (RARE) composed of tandem 5'-AGGTCA-3' sites known as DR1-DR5. In the absence of ligand, the RXR-RAR heterodimers associate with a multiprotein complex containing transcription corepressors that induce histone deacetylation, chromatin condensation and transcriptional suppression. On ligand binding, the corepressors dissociate from the receptors and associate with the coactivators leading to transcriptional activation. Formation of a complex with histone deacetylases might lead to inhibition of RARE DNA element binding and to transcriptional repression. Transcriptional activation and RARE DNA element binding might be supported by the transcription factor KLF2. RARA plays an essential role in the regulation of retinoic acid-induced germ cell development during spermatogenesis. Has a role in the survival of early spermatocytes at the beginning prophase of meiosis. In Sertoli cells, may promote the survival and development of early meiotic prophase spermatocytes. In concert with RARG, required for skeletal growth, matrix homeostasis and growth plate function. Together with RXRA, positively regulates microRNA-10a expression, thereby inhibiting the GATA6/VCAM1 signaling response to pulsatile shear stress in vascular endothelial cells. In association with HDAC3, HDAC5 and HDAC7 corepressors, plays a role in the repression of microRNA-10a and thereby promotes the inflammatory response. In Homo sapiens (Human), this protein is Retinoic acid receptor alpha (RARA).